Reading from the N-terminus, the 558-residue chain is Potassium-transporting ATPase potassium-binding subunit (558 aa).

12 helical membrane passes run Leu2–Leu22, Val66–Phe86, Ala135–Ile155, Ile177–Thr197, Leu253–Met273, Gly280–Val300, Phe327–Val347, Leu354–Gly374, Gly378–Gly398, Ile413–Ile433, Leu482–Leu502, and Gly528–Leu548.

It belongs to the KdpA family. The system is composed of three essential subunits: KdpA, KdpB and KdpC.

It is found in the cell inner membrane. Its function is as follows. Part of the high-affinity ATP-driven potassium transport (or Kdp) system, which catalyzes the hydrolysis of ATP coupled with the electrogenic transport of potassium into the cytoplasm. This subunit binds the periplasmic potassium ions and delivers the ions to the membrane domain of KdpB through an intramembrane tunnel. The polypeptide is Potassium-transporting ATPase potassium-binding subunit (Synechocystis sp. (strain ATCC 27184 / PCC 6803 / Kazusa)).